The sequence spans 76 residues: Large ribosomal subunit protein uL29 (76 aa).

This sequence belongs to the universal ribosomal protein uL29 family.

This Corynebacterium aurimucosum (strain ATCC 700975 / DSM 44827 / CIP 107346 / CN-1) (Corynebacterium nigricans) protein is Large ribosomal subunit protein uL29.